Here is a 399-residue protein sequence, read N- to C-terminus: Tryptophan synthase beta chain (399 aa).

Lys-92 is subject to N6-(pyridoxal phosphate)lysine.

Belongs to the TrpB family. In terms of assembly, tetramer of two alpha and two beta chains. It depends on pyridoxal 5'-phosphate as a cofactor.

The enzyme catalyses (1S,2R)-1-C-(indol-3-yl)glycerol 3-phosphate + L-serine = D-glyceraldehyde 3-phosphate + L-tryptophan + H2O. It functions in the pathway amino-acid biosynthesis; L-tryptophan biosynthesis; L-tryptophan from chorismate: step 5/5. Its function is as follows. The beta subunit is responsible for the synthesis of L-tryptophan from indole and L-serine. This is Tryptophan synthase beta chain from Exiguobacterium sibiricum (strain DSM 17290 / CCUG 55495 / CIP 109462 / JCM 13490 / 255-15).